The chain runs to 724 residues: Degenerin mec-10 (724 aa).

Positions 1 to 15 are enriched in polar residues; that stretch reads MNRNPRMSKFQPNPR. The disordered stretch occupies residues 1–22; the sequence is MNRNPRMSKFQPNPRSRSRFQD. The Cytoplasmic portion of the chain corresponds to 1 to 122; it reads MNRNPRMSKF…GQAPNSLYRA (122 aa). Residues 123 to 143 traverse the membrane as a helical segment; the sequence is AWVFLLLICAIQFINQAVAVI. At 144–684 the chain is on the extracellular side; it reads QKYQKMDKIT…FGGHLGLWSG (541 aa). Positions 229–265 are disordered; sequence KRGAGEKGTFEPANSACECDEEDGSNECEERSTEKPS. The span at 246-255 shows a compositional bias: acidic residues; that stretch reads ECDEEDGSNE. The segment covering 256–265 has biased composition (basic and acidic residues); that stretch reads CEERSTEKPS. Asparagine 293, asparagine 369, asparagine 463, asparagine 605, and asparagine 624 each carry an N-linked (GlcNAc...) asparagine glycan. Residues 685–705 traverse the membrane as a helical segment; the sequence is VSVMTCCEFVCLAFELIYMAI. The Cytoplasmic segment spans residues 706–724; sequence AHHINQQRIRRRENAANEY.

Belongs to the amiloride-sensitive sodium channel (TC 1.A.6) family. As to quaternary structure, component of a non-voltage-gated amiloride-sensitive cation channel complex (also called the degenerin channel complex) composed of at least the mec-2, mec-4, mec-6 and mec-10 subunits; the complex mediates mechanotransduction in touch cells. Interacts with mec-4 and mec-6.

Its subcellular location is the cell membrane. Subunit of an amiloride-sensitive cation channel (degenerin channel complex) permeable for sodium, potassium, lithium and N-methylglucamine, and required for mechanosensory transduction (touch sensitivity). Negatively regulates the turning step of male mating behavior. The protein is Degenerin mec-10 of Caenorhabditis elegans.